The sequence spans 369 residues: Replication factor C subunit 5 (369 aa).

The disordered stretch occupies residues 21-40; the sequence is INKGKDVVGFGPPPQSKATP. 79 to 86 provides a ligand contact to ATP; that stretch reads GPPGTGKT.

The protein belongs to the activator 1 small subunits family. In terms of assembly, heterotetramer of subunits RFC2, RFC3, RFC4 and RFC5 that can form a complex with RFC1.

Its subcellular location is the nucleus. Its function is as follows. Functions in cell replication and proliferation. May be involved in chromatin assembly and remodeling. Plays a role in the negative control of pathogenesis-related gene expression and systemic acquired resistance (SAR). In Arabidopsis thaliana (Mouse-ear cress), this protein is Replication factor C subunit 5 (RFC5).